We begin with the raw amino-acid sequence, 246 residues long: Putative outer membrane protein YiaT (246 aa).

The N-terminal stretch at 1 to 21 (MLINRNIVALFALPFMASATA) is a signal peptide.

The protein belongs to the MipA/OmpV family.

Its subcellular location is the cell outer membrane. The polypeptide is Putative outer membrane protein YiaT (yiaT) (Escherichia coli (strain K12)).